We begin with the raw amino-acid sequence, 151 residues long: Monooxygenase nsrQ (151 aa).

This sequence belongs to the avfA family.

The protein operates within secondary metabolite biosynthesis. Its function is as follows. Monooxygenase; part of the gene cluster that mediates the biosynthesis of the tetrahydroxanthone dimer neosartorin, which exhibits antibacterial activity. The two different monomeric units appear to be synthesized by the same set of enzymes, among which the Baeyer-Villiger monooxygenase nsrF is the key enzyme for the divergence of the biosynthetic routes. The pathway begins with the synthesis of atrochrysone thioester by the polyketide synthase nsrB. The atrochrysone carboxyl ACP thioesterase nsrC then breaks the thioester bond and releases the atrochrysone carboxylic acid from AacuL. Atrochrysone carboxylic acid is decarboxylated by the decarboxylase nsrE, and oxidized by the anthrone oxygenase nsrD to yield emodin. Emodin is then reduced to emodin hydroquinone by the oxidoreductase nsrR. A-ring reduction by the short chain dehydrogenase nsrJ, dehydration by the scytalone dehydratase-like protein nsrI and probable spontaneous re-oxidation, results in overall deoxygenation to chrysophanol. The Baeyer-Villiger monooxygenase nsrF accepts chrysophanol as a substrate to insert one oxygen atom at two different positions to yield the precursors of both monomric units. NsrF is promiscuous/flexible in interacting with the 2 (non methylated and methylated) aromatic rings of chrysophanol, thus diverging the biosynthetic pathway at this point. After the hydrolysis of the lactones, methylesterification by the methyltransferase nsrG yields respectively moniliphenone and 2,2',6'-trihydroxy-4-methyl-6-methoxya-cyldiphenylmethanone. The next steps are the hydroxylation by the FAD-dependent monooxygenase nsrK, followed by isomerization by the monooxygenase nsrQ. The short chain dehydrogenase/reductase nsrO then catalyzes the C-5 ketoreduction to give the xanthone skeleton of blennolide C and 5-acetylblennolide A. The acetyltransferase nsrL has a strict substrate specificity and uses only blennolide A but not blennolide C to yield 5-acetylblennolide A as the single-acetylated product. In the final step of the biosynthesis, the heterodimerization of the 2 xanthones, blennolide C and 5-acetylblennolide A, is catalyzed by the cytochrome P450 monooxygenase nsrP. NsrP can utilize at least three different xanthones as its substrates to perform the dimerization reaction. In Aspergillus novofumigatus (strain IBT 16806), this protein is Monooxygenase nsrQ.